Consider the following 410-residue polypeptide: Chitinase-3-like protein 1 (410 aa).

A signal peptide spans 1–48 (MGVKAAQTGIWASQGQSIRVVGFQAQTAHRAICLLGFVVLVLLQCCSA). The 362-residue stretch at 49 to 410 (YKLVCYYTSW…NAIKDALAAT (362 aa)) folds into the GH18 domain. The cysteines at positions 53 and 78 are disulfide-linked. N87 is a glycosylation site (N-linked (GlcNAc...) asparagine). Chitin-binding positions include 97–98 (EW), 124–127 (GGWN), Y168, 231–234 (MTYD), and R290. An intrachain disulfide couples C327 to C391. The tract at residues 351 to 365 (QWVGYDDQESVKSKV) is important for AKT1 activation and IL8 production. Position 379 (W379) interacts with chitin.

It belongs to the glycosyl hydrolase 18 family. As to quaternary structure, monomer.

It localises to the secreted. Its subcellular location is the extracellular space. It is found in the cytoplasm. The protein resides in the perinuclear region. The protein localises to the endoplasmic reticulum. In terms of biological role, carbohydrate-binding lectin with a preference for chitin. Has no chitinase activity. May play a role in tissue remodeling and in the capacity of cells to respond to and cope with changes in their environment. Plays a role in T-helper cell type 2 (Th2) inflammatory response and IL-13-induced inflammation, regulating allergen sensitization, inflammatory cell apoptosis, dendritic cell accumulation and M2 macrophage differentiation. Facilitates invasion of pathogenic enteric bacteria into colonic mucosa and lymphoid organs. Mediates activation of AKT1 signaling pathway and subsequent IL8 production in colonic epithelial cells. Regulates antibacterial responses in lung by contributing to macrophage bacterial killing, controlling bacterial dissemination and augmenting host tolerance. Also regulates hyperoxia-induced injury, inflammation and epithelial apoptosis in lung. This chain is Chitinase-3-like protein 1 (CHI3L1), found in Pongo abelii (Sumatran orangutan).